The chain runs to 68 residues: Phycobilisome 7.8 kDa linker polypeptide, allophycocyanin-associated, core (68 aa).

A CpcD-like domain is found at Ala2 to Ala57.

Belongs to the phycobilisome linker protein family.

It localises to the cellular thylakoid membrane. Functionally, rod linker protein, associated with allophycocyanin. Linker polypeptides determine the state of aggregation and the location of the disk-shaped phycobiliprotein units within the phycobilisome and modulate their spectroscopic properties in order to mediate a directed and optimal energy transfer. The sequence is that of Phycobilisome 7.8 kDa linker polypeptide, allophycocyanin-associated, core (apcC) from Microchaete diplosiphon (Fremyella diplosiphon).